Consider the following 354-residue polypeptide: Homer protein homolog 2 (354 aa).

The WH1 domain occupies 1–110 (MGEQPIFTTR…EKFQEVKEAA (110 aa)). Residues 92 to 122 (SEQQLTKFAEKFQEVKEAAKIAKDKTQEKIE) adopt a coiled-coil conformation. A compositionally biased stretch (basic and acidic residues) spans 112–122 (IAKDKTQEKIE). A disordered region spans residues 112–166 (IAKDKTQEKIETSSNHSQESGRETPSSTQASSVNGTDDEKASHAGPANTHLKSEN). Positions 123-146 (TSSNHSQESGRETPSSTQASSVNG) are enriched in polar residues. A coiled-coil region spans residues 160-329 (THLKSENDKL…RHLKVELKSF (170 aa)).

The protein belongs to the Homer family. In terms of assembly, forms coiled-coil structures that mediate homo- and heteromultimerization. Interacts with NFATC2; interaction is reduced by AKT activation. Interacts with NFATC1 and NFATC4. Interacts with DAGLA (via PPXXF motif); this interaction is required for the cell membrane localization of DAGLA.

It localises to the cytoplasm. Its subcellular location is the cell membrane. It is found in the postsynaptic density. The protein resides in the synapse. The protein localises to the cell projection. It localises to the stereocilium. Functionally, postsynaptic density scaffolding protein. Binds and cross-links cytoplasmic regions of GRM1, GRM5, ITPR1, DNM3, RYR1, RYR2, SHANK1 and SHANK3. By physically linking GRM1 and GRM5 with ER-associated ITPR1 receptors, it aids the coupling of surface receptors to intracellular calcium release. May also couple GRM1 to PI3 kinase through its interaction with AGAP2. Isoforms can be differently regulated and may play an important role in maintaining the plasticity at glutamatergic synapses. Required for normal hearing. Negatively regulates T cell activation by inhibiting the calcineurin-NFAT pathway. Acts by competing with calcineurin/PPP3CA for NFAT protein binding, hence preventing NFAT activation by PPP3CA. This is Homer protein homolog 2 from Homo sapiens (Human).